The primary structure comprises 535 residues: Cytochrome P450 monooxygenase atE (535 aa).

Heme is bound at residue C455.

The protein belongs to the cytochrome P450 family. Requires heme as cofactor.

It catalyses the reaction 3-methylcatechol + AH2 + O2 = 3-methylbenzene-1,2,4-triol + A + H2O. It functions in the pathway secondary metabolite biosynthesis. Cytochrome P450 monooxygenase; part of the gene cluster that mediates the biosynthesis of terreic acid, a quinone epoxide inhibitor of Bruton's tyrosine kinase. The first step of the pathway is the synthesis of 6-methylsalicylic acid (6-MSA) by the 6-methylsalicylic acid synthase atX. In the biosynthesis of 6-MSA, atX utilizes one acetyl-CoA and three malonyl-CoAs as its substrates and catalyzes a series of programmed reactions including Claisen condensation, reduction, aldol cyclization, and the hydrolytic cleavage that yields 6-MSA. The 6-methylsalicylate 1-monooxygenase atA then catalyzes the decarboxylative hydroxylation of 6-MSA to 3-methylcatechol. The next step is the conversion of 3-methylcatechol to 3-methyl-1,2,4-benzenetriol by cytochrome P450 monooxygenase atE, which is enhanced by cytochrome P450 monooxygenase atG. Then, the epoxidase atD catalyzes the epoxidation and hydroxyl oxidation of 3-methyl-1,2,4-benzenetriol to terremutin. Lastly, GMC oxidoreductase atC oxidizes terremutin to terreic acid. The polypeptide is Cytochrome P450 monooxygenase atE (Aspergillus terreus (strain NIH 2624 / FGSC A1156)).